The following is a 201-amino-acid chain: Regulator of G-protein signaling rgs-1 (201 aa).

An RGS domain is found at 37-156 (SWQQSFDTLM…FLTSIFYRET (120 aa)). The segment at 168–201 (GGDEEKEREQRAERARLNVPATAAEGSSKDISMV) is disordered. A compositionally biased stretch (basic and acidic residues) spans 170-183 (DEEKEREQRAERAR).

Expressed in most or all neurons.

In terms of biological role, inhibits G protein signaling in nervous system, interacting preferentially with the G(O) subfamily member goa-1. In vitro, protein acts as a GTPase activator of goa-1. Rgs-1 and rgs-2 redundantly adjust signaling when worms are fed to allow rapid induction of egg-laying behavior. In Caenorhabditis elegans, this protein is Regulator of G-protein signaling rgs-1 (rgs-1).